Reading from the N-terminus, the 307-residue chain is Metapyrocatechase (307 aa).

VOC domains lie at 7 to 122 (RPGH…LYAD) and 150 to 269 (RFDH…VFCG). Positions 153, 214, and 265 each coordinate Fe cation.

Belongs to the extradiol ring-cleavage dioxygenase family. As to quaternary structure, homotetramer. Requires Fe(2+) as cofactor.

The enzyme catalyses catechol + O2 = (2Z,4E)-2-hydroxy-6-oxohexa-2,4-dienoate + H(+). Its pathway is xenobiotic degradation; toluene degradation. This is Metapyrocatechase (xylE) from Pseudomonas putida (Arthrobacter siderocapsulatus).